The chain runs to 360 residues: MTKMKMDVTIELDLDGDDWEEVDVLSDKCVEDILEDVHIDDPILVSDVRITLPANIRIKNFKKEIRDLILANLDVPTTVSAGSWQIVSSFLRGIEYSEIGGRERNSKLSWKPFEDMHAQILVNALAYAQRVDILVKLKSYIDSNSYLKNVPEPMFAFADTDSMASTTTFSEYAEPVHSMNARKKILLLHYETTSKEKEDFKWFKCNLKNVLEKERKEGKDLEVFDVKVWEKDDRGNVFQELEKHYDLFPHIVVCFNKSYIEATKPNSKSKMPQFRKSISDKLNVEFHMNGNRNLRGRCVLMSEVEKVTDTYWAAVTNQYPFPGSFEPFVKRLLRDGKVKKQSHNNANDHHEDSMNYSITQ.

The disordered stretch occupies residues 339–360 (KKQSHNNANDHHEDSMNYSITQ).

Interacts with the receptor complex composed of ilcr-1 and ilcr-2. Also interacts with pik-1. In terms of tissue distribution, expressed in neurons.

May act as an adapter to facilitate downstream signaling for the receptor complex composed of ilcr-1 and ilcr-2, which is a signaling complex that modulates neuronal activity and animal behavior in response to sensory neuron input. The polypeptide is ACT1-like protein (Caenorhabditis elegans).